Reading from the N-terminus, the 388-residue chain is MRSSVLFSLYAATLVAAVAHPKDPQIVLQESQATIVEPDEYLIELSPGETRWVTEDDKWALRRENINFFDITHNKELGTLNHKLSTESVKFPSKPAHNESIVPLLKELKKENMRTHLETFTSFHTRYYKSHYGAESSAWLLEQVRKTLTDAGASKASVKAFPHPWGQASIIATIPGKSDKTVVIGAHQDSINLFLPSILAAPGADDDGSGTVTILEALRVLLKSEEVLKGEADNTIEFHWYSAEEGGLLGSQAIFQSYEKEGRDVKAMLQQDMTGYVQKTLDAGEPESVGVITDFVHPGLTEFIKKIITVYCDIPYVLTKCGYACSDHASASKAGYPSAFVIESDFKYSDNKIHTTEDKIEYLSFDHMLQHARLTLGLVYELAFAKFK.

Positions 1-19 (MRSSVLFSLYAATLVAAVA) are cleaved as a signal peptide. A propeptide spanning residues 20 to 88 (HPKDPQIVLQ…TLNHKLSTES (69 aa)) is cleaved from the precursor. An N-linked (GlcNAc...) asparagine glycan is attached at N98. Zn(2+)-binding residues include H187, D206, E245, and D272. C321 and C325 are joined by a disulfide. Residue H354 coordinates Zn(2+).

It belongs to the peptidase M28 family. M28E subfamily. As to quaternary structure, monomer. Requires Zn(2+) as cofactor.

The protein resides in the secreted. Its function is as follows. Extracellular aminopeptidase that allows assimilation of proteinaceous substrates. This Leptosphaeria maculans (strain JN3 / isolate v23.1.3 / race Av1-4-5-6-7-8) (Blackleg fungus) protein is Leucine aminopeptidase 1 (LAP1).